We begin with the raw amino-acid sequence, 515 residues long: Fc receptor-like protein 4 (515 aa).

An N-terminal signal peptide occupies residues 1–19 (MLLWASLLAFAPVCGQSAA). The Extracellular portion of the chain corresponds to 20 to 387 (AHKPVISVHP…RETPGNRDGL (368 aa)). Ig-like C2-type domains are found at residues 23 to 97 (PVIS…NPVR), 102 to 183 (SDSL…NFKI), 193 to 271 (PELK…GNIH), and 275 to 374 (PSLQ…MVLN). 4 disulfides stabilise this stretch: Cys44–Cys85, Cys123–Cys167, Cys212–Cys261, and Cys310–Cys359. An N-linked (GlcNAc...) asparagine glycan is attached at Asn374. A helical membrane pass occupies residues 388-408 (VAAGATGGLLSALLLAVALLF). Residues 409-515 (HCWRRRKSGV…GKISSKDEES (107 aa)) lie on the Cytoplasmic side of the membrane. Short sequence motifs (ITIM motif) lie at residues 449–454 (SLYVDV), 461–466 (LVYSEI), and 491–496 (VVYSEV). The tract at residues 494-515 (SEVKTQHPDNSAGKISSKDEES) is disordered.

As to quaternary structure, interacts with PTPN6 and PTPN11. Phosphorylated on cytoplasmic tyrosines upon activation. Specifically expressed by memory and monocytoid B-cells which populate spleen and lymph nodes. Preferentially expressed in memory B-cells associated with mucosal tissue (at protein level).

The protein localises to the cell membrane. In terms of biological role, may function as an inhibitor of the B-cell receptor signaling. May function in the B-cell-mediated immune response. The polypeptide is Fc receptor-like protein 4 (FCRL4) (Homo sapiens (Human)).